A 723-amino-acid polypeptide reads, in one-letter code: Tripartite motif-containing protein 42 (723 aa).

The segment at 146 to 192 adopts an RING-type zinc-finger fold; it reads CPMCSRLRLHSFMLPCNHSLCEKCLRQLQKHAEVTENFFILICPVCD. B box-type zinc fingers lie at residues 235-280 and 285-326; these read PILC…FVDT and QDEK…TISL. Positions 290, 293, 313, and 318 each coordinate Zn(2+). A coiled-coil region spans residues 382–407; that stretch reads KLRSILQEKEKIIMEQIENLEVSRQK. The COS domain occupies 434–492; that stretch reads LKETGQVAFLQSAKILVDQIEDGIQTTYRPDPQLRLHSINYVPLDFVELSSAIHELFPT. Residues 603–701 form the Fibronectin type-III domain; that stretch reads TPGPIVIYQT…DICKVVTPDG (99 aa).

This sequence belongs to the TRIM/RBCC family.

This is Tripartite motif-containing protein 42 (TRIM42) from Homo sapiens (Human).